Reading from the N-terminus, the 115-residue chain is NADH-ubiquinone oxidoreductase chain 3 (115 aa).

The next 3 helical transmembrane spans lie at 4–24 (ALTL…AFWL), 55–75 (FFLV…LLPL), and 84–104 (LTTM…SLAY).

This sequence belongs to the complex I subunit 3 family. As to quaternary structure, core subunit of respiratory chain NADH dehydrogenase (Complex I) which is composed of 45 different subunits. Interacts with TMEM186. Interacts with TMEM242.

It is found in the mitochondrion inner membrane. It catalyses the reaction a ubiquinone + NADH + 5 H(+)(in) = a ubiquinol + NAD(+) + 4 H(+)(out). Its function is as follows. Core subunit of the mitochondrial membrane respiratory chain NADH dehydrogenase (Complex I) which catalyzes electron transfer from NADH through the respiratory chain, using ubiquinone as an electron acceptor. Essential for the catalytic activity of complex I. The chain is NADH-ubiquinone oxidoreductase chain 3 from Halichoerus grypus (Gray seal).